Consider the following 459-residue polypeptide: Glycosyl hydrolase family 109 protein (459 aa).

The segment at residues 1 to 31 (MHNIHRRNFLKAAGAATAGLVTANIALSAYA) is a signal peptide (tat-type signal). NAD(+) is bound by residues 64-65 (ER), aspartate 86, 135-138 (WEWH), 155-156 (EV), and asparagine 184. Residues tyrosine 213, arginine 232, 244–247 (YPTH), and tyrosine 326 contribute to the substrate site. Residue tyrosine 244 coordinates NAD(+).

It belongs to the Gfo/Idh/MocA family. Glycosyl hydrolase 109 subfamily. It depends on NAD(+) as a cofactor. In terms of processing, predicted to be exported by the Tat system. The position of the signal peptide cleavage has not been experimentally proven.

Glycosidase. This chain is Glycosyl hydrolase family 109 protein, found in Shewanella baltica (strain OS185).